Consider the following 77-residue polypeptide: MKSKIMSWLDELPGAAATDFLARRDQIAALMEQAAELTRQAEELRHKAYLQGCTLEGEAKGHWSTQEVERAKARAGW.

To E.coli KleC (kcrB1).

The chain is Protein KleA (kleA) from Escherichia coli.